Consider the following 879-residue polypeptide: Fanconi anemia core complex-associated protein 100 (879 aa).

In terms of assembly, belongs to the multisubunit FA complex composed of FANCA, FANCB, FANCC, FANCE, FANCF, FANCG, FANCL/PHF9, FANCM, FAAP24 and FAAP100. Forms a subcomplex with FANCB and FANCL.

It is found in the nucleus. Plays a role in Fanconi anemia-associated DNA damage response network. Regulates FANCD2 monoubiquitination and the stability of the FA core complex. Induces chromosomal instability as well as hypersensitivity to DNA cross-linking agents, when repressed. This Mus musculus (Mouse) protein is Fanconi anemia core complex-associated protein 100.